The primary structure comprises 565 residues: uncharacterized protein (565 aa).

A run of 13 helical transmembrane segments spans residues 8–28 (ISFI…GIFF), 43–63 (LAIF…LALI), 95–115 (MTYL…ICSI), 137–157 (WLIW…IPPL), 167–187 (MVVS…GFIV), 227–247 (FTGI…FFAY), 268–288 (WALF…AVAL), 314–334 (IVFG…INGF), 367–387 (VVGV…FTVI), 424–444 (ATWT…GAIV), 460–480 (FLPA…VTII), 482–502 (PFIN…TVLG), and 516–536 (VMLI…VYVE).

This sequence to M.pneumoniae MPN_095 and MPN_096.

The protein resides in the cell membrane. This is an uncharacterized protein from Mycoplasma pneumoniae (strain ATCC 29342 / M129 / Subtype 1) (Mycoplasmoides pneumoniae).